The following is a 334-amino-acid chain: N-acetyl-gamma-glutamyl-phosphate reductase (334 aa).

Cys154 is an active-site residue.

It belongs to the NAGSA dehydrogenase family. Type 1 subfamily.

Its subcellular location is the cytoplasm. It carries out the reaction N-acetyl-L-glutamate 5-semialdehyde + phosphate + NADP(+) = N-acetyl-L-glutamyl 5-phosphate + NADPH + H(+). It participates in amino-acid biosynthesis; L-arginine biosynthesis; N(2)-acetyl-L-ornithine from L-glutamate: step 3/4. Its function is as follows. Catalyzes the NADPH-dependent reduction of N-acetyl-5-glutamyl phosphate to yield N-acetyl-L-glutamate 5-semialdehyde. In Escherichia coli O157:H7, this protein is N-acetyl-gamma-glutamyl-phosphate reductase.